Here is a 348-residue protein sequence, read N- to C-terminus: Dihydroorotase (348 aa).

Zn(2+) is bound by residues His-17 and His-19. Substrate contacts are provided by residues 19 to 21 and Asn-45; that span reads HLR. Residues Lys-103, His-140, and His-178 each coordinate Zn(2+). The residue at position 103 (Lys-103) is an N6-carboxylysine. Residue His-140 participates in substrate binding. Residue Leu-223 coordinates substrate. Asp-251 lines the Zn(2+) pocket. Residue Asp-251 is part of the active site. Substrate-binding residues include His-255 and Ala-267.

It belongs to the metallo-dependent hydrolases superfamily. DHOase family. Class II DHOase subfamily. In terms of assembly, homodimer. It depends on Zn(2+) as a cofactor.

The enzyme catalyses (S)-dihydroorotate + H2O = N-carbamoyl-L-aspartate + H(+). The protein operates within pyrimidine metabolism; UMP biosynthesis via de novo pathway; (S)-dihydroorotate from bicarbonate: step 3/3. Functionally, catalyzes the reversible cyclization of carbamoyl aspartate to dihydroorotate. In Escherichia coli (strain UTI89 / UPEC), this protein is Dihydroorotase.